Here is a 76-residue protein sequence, read N- to C-terminus: Sec-independent protein translocase protein TatA (76 aa).

The chain crosses the membrane as a helical span at residues 1-21 (MGSFSIWHWLIVLVIVMLVFG). 2 stretches are compositionally biased toward basic and acidic residues: residues 41–50 (DGMKDGEDKG) and 57–76 (KELRDSTTIDVDAKEKSRQQ). Positions 41 to 76 (DGMKDGEDKGAQPAASKELRDSTTIDVDAKEKSRQQ) are disordered.

Belongs to the TatA/E family. As to quaternary structure, the Tat system comprises two distinct complexes: a TatABC complex, containing multiple copies of TatA, TatB and TatC subunits, and a separate TatA complex, containing only TatA subunits. Substrates initially bind to the TatABC complex, which probably triggers association of the separate TatA complex to form the active translocon.

It is found in the cell inner membrane. Part of the twin-arginine translocation (Tat) system that transports large folded proteins containing a characteristic twin-arginine motif in their signal peptide across membranes. TatA could form the protein-conducting channel of the Tat system. This is Sec-independent protein translocase protein TatA from Cupriavidus taiwanensis (strain DSM 17343 / BCRC 17206 / CCUG 44338 / CIP 107171 / LMG 19424 / R1) (Ralstonia taiwanensis (strain LMG 19424)).